Consider the following 702-residue polypeptide: Methionine--tRNA ligase (702 aa).

The 'HIGH' region motif lies at 23–33; sequence PYANGPLHLGH. 4 residues coordinate Zn(2+): C154, C157, C167, and C170. The short motif at 341 to 345 is the 'KMSKS' region element; the sequence is KMSKS. Position 344 (K344) interacts with ATP. The interval 562-593 is disordered; sequence LAPPPASAKQQNASMSNTAPPPTAEEPETTAP. Residues 569-578 are compositionally biased toward polar residues; sequence AKQQNASMSN. The tRNA-binding domain occupies 599–702; it reads DFAKLDLRIG…SSAQPGMPVR (104 aa).

It belongs to the class-I aminoacyl-tRNA synthetase family. MetG type 1 subfamily. Homodimer. Zn(2+) serves as cofactor.

It is found in the cytoplasm. It carries out the reaction tRNA(Met) + L-methionine + ATP = L-methionyl-tRNA(Met) + AMP + diphosphate. Functionally, is required not only for elongation of protein synthesis but also for the initiation of all mRNA translation through initiator tRNA(fMet) aminoacylation. The sequence is that of Methionine--tRNA ligase from Xylella fastidiosa (strain M12).